Consider the following 145-residue polypeptide: D-aminoacyl-tRNA deacylase (145 aa).

The short motif at 137–138 (GP) is the Gly-cisPro motif, important for rejection of L-amino acids element.

Belongs to the DTD family. In terms of assembly, homodimer.

Its subcellular location is the cytoplasm. It carries out the reaction glycyl-tRNA(Ala) + H2O = tRNA(Ala) + glycine + H(+). It catalyses the reaction a D-aminoacyl-tRNA + H2O = a tRNA + a D-alpha-amino acid + H(+). An aminoacyl-tRNA editing enzyme that deacylates mischarged D-aminoacyl-tRNAs. Also deacylates mischarged glycyl-tRNA(Ala), protecting cells against glycine mischarging by AlaRS. Acts via tRNA-based rather than protein-based catalysis; rejects L-amino acids rather than detecting D-amino acids in the active site. By recycling D-aminoacyl-tRNA to D-amino acids and free tRNA molecules, this enzyme counteracts the toxicity associated with the formation of D-aminoacyl-tRNA entities in vivo and helps enforce protein L-homochirality. The chain is D-aminoacyl-tRNA deacylase from Shewanella loihica (strain ATCC BAA-1088 / PV-4).